The sequence spans 485 residues: Glutamyl-tRNA(Gln) amidotransferase subunit A (485 aa).

Residues K82 and S157 each act as charge relay system in the active site. The active-site Acyl-ester intermediate is S181.

It belongs to the amidase family. GatA subfamily. In terms of assembly, heterotrimer of A, B and C subunits.

It catalyses the reaction L-glutamyl-tRNA(Gln) + L-glutamine + ATP + H2O = L-glutaminyl-tRNA(Gln) + L-glutamate + ADP + phosphate + H(+). Allows the formation of correctly charged Gln-tRNA(Gln) through the transamidation of misacylated Glu-tRNA(Gln) in organisms which lack glutaminyl-tRNA synthetase. The reaction takes place in the presence of glutamine and ATP through an activated gamma-phospho-Glu-tRNA(Gln). This chain is Glutamyl-tRNA(Gln) amidotransferase subunit A, found in Treponema denticola (strain ATCC 35405 / DSM 14222 / CIP 103919 / JCM 8153 / KCTC 15104).